The primary structure comprises 215 residues: uncharacterized protein (215 aa).

The N-terminal stretch at 1 to 17 is a signal peptide; sequence MKKVLASATILSLMLVG. The segment at 17-110 is disordered; sequence GCSNGGNDES…NKQQQSVQDN (94 aa). Residue cysteine 18 is the site of N-palmitoyl cysteine attachment. Cysteine 18 carries S-diacylglycerol cysteine lipidation. A compositionally biased stretch (basic and acidic residues) spans 25-69; the sequence is ESSHKDDSSKTEQKDKSSSQHDSKKDSKRNDTNNKQDNQENKSNK. Over residues 70 to 95 the composition is skewed to polar residues; that stretch reads EQTSNQNSNAGEQRTSERPTTNSNGI. The segment covering 96–110 has biased composition (low complexity); it reads SSDNQNKQQQSVQDN.

The protein localises to the cell membrane. This is an uncharacterized protein from Staphylococcus epidermidis (strain ATCC 12228 / FDA PCI 1200).